Reading from the N-terminus, the 492-residue chain is Trypanothione reductase (492 aa).

35–52 (DVQTVHGPPFFAALGGTC) contributes to the FAD binding site. Residues cysteine 52 and cysteine 57 are joined by a disulfide bond. The active-site Proton acceptor is the histidine 461.

The protein belongs to the class-I pyridine nucleotide-disulfide oxidoreductase family. In terms of assembly, homodimer. FAD is required as a cofactor.

The protein resides in the cytoplasm. The catalysed reaction is trypanothione + NADP(+) = trypanothione disulfide + NADPH + H(+). Functionally, trypanothione is the parasite analog of glutathione; this enzyme is the equivalent of glutathione reductase. This is Trypanothione reductase (TPR) from Trypanosoma congolense.